The following is a 268-amino-acid chain: Aliphatic sulfonates import ATP-binding protein SsuB 3 (268 aa).

Positions 1–27 (MTAAEAPLPPLAPRERTATTAAERRTG) are disordered. The span at 13–26 (PRERTATTAAERRT) shows a compositional bias: basic and acidic residues. Residues 32–247 (VSLSGVRKSF…DRNDPEALRY (216 aa)) enclose the ABC transporter domain. 64 to 71 (GPSGTGKT) provides a ligand contact to ATP.

This sequence belongs to the ABC transporter superfamily. Aliphatic sulfonates importer (TC 3.A.1.17.2) family. As to quaternary structure, the complex is composed of two ATP-binding proteins (SsuB), two transmembrane proteins (SsuC) and a solute-binding protein (SsuA).

The protein resides in the cell membrane. The catalysed reaction is ATP + H2O + aliphatic sulfonate-[sulfonate-binding protein]Side 1 = ADP + phosphate + aliphatic sulfonateSide 2 + [sulfonate-binding protein]Side 1.. Part of the ABC transporter complex SsuABC involved in aliphatic sulfonates import. Responsible for energy coupling to the transport system. The sequence is that of Aliphatic sulfonates import ATP-binding protein SsuB 3 from Rhodococcus jostii (strain RHA1).